Reading from the N-terminus, the 457-residue chain is ATP synthase subunit beta (457 aa).

Position 147–154 (147–154) interacts with ATP; it reads GGAGVGKT.

The protein belongs to the ATPase alpha/beta chains family. In terms of assembly, F-type ATPases have 2 components, CF(1) - the catalytic core - and CF(0) - the membrane proton channel. CF(1) has five subunits: alpha(3), beta(3), gamma(1), delta(1), epsilon(1). CF(0) has three main subunits: a(1), b(2) and c(9-12). The alpha and beta chains form an alternating ring which encloses part of the gamma chain. CF(1) is attached to CF(0) by a central stalk formed by the gamma and epsilon chains, while a peripheral stalk is formed by the delta and b chains.

Its subcellular location is the cell inner membrane. It catalyses the reaction ATP + H2O + 4 H(+)(in) = ADP + phosphate + 5 H(+)(out). Produces ATP from ADP in the presence of a proton gradient across the membrane. The catalytic sites are hosted primarily by the beta subunits. This Actinobacillus pleuropneumoniae serotype 3 (strain JL03) protein is ATP synthase subunit beta.